The sequence spans 343 residues: Holliday junction branch migration complex subunit RuvB (343 aa).

Positions 1 to 185 are large ATPase domain (RuvB-L); that stretch reads MEQEDFNIRE…FGINLHLEYY (185 aa). Residues Leu24, Arg25, Gly66, Lys69, Thr70, Thr71, 132 to 134, Arg175, Tyr185, and Arg222 each bind ATP; that span reads EDY. Mg(2+) is bound at residue Thr70. Residues 186–256 are small ATPAse domain (RuvB-S); that stretch reads DDDILSNIIR…IAQFALEALN (71 aa). Residues 259-343 form a head domain (RuvB-H) region; that stretch reads KYGLDEIDNK…YSSQKTLFND (85 aa). 2 residues coordinate DNA: Arg314 and Arg319.

This sequence belongs to the RuvB family. In terms of assembly, homohexamer. Forms an RuvA(8)-RuvB(12)-Holliday junction (HJ) complex. HJ DNA is sandwiched between 2 RuvA tetramers; dsDNA enters through RuvA and exits via RuvB. An RuvB hexamer assembles on each DNA strand where it exits the tetramer. Each RuvB hexamer is contacted by two RuvA subunits (via domain III) on 2 adjacent RuvB subunits; this complex drives branch migration. In the full resolvosome a probable DNA-RuvA(4)-RuvB(12)-RuvC(2) complex forms which resolves the HJ.

Its subcellular location is the cytoplasm. The enzyme catalyses ATP + H2O = ADP + phosphate + H(+). In terms of biological role, the RuvA-RuvB-RuvC complex processes Holliday junction (HJ) DNA during genetic recombination and DNA repair, while the RuvA-RuvB complex plays an important role in the rescue of blocked DNA replication forks via replication fork reversal (RFR). RuvA specifically binds to HJ cruciform DNA, conferring on it an open structure. The RuvB hexamer acts as an ATP-dependent pump, pulling dsDNA into and through the RuvAB complex. RuvB forms 2 homohexamers on either side of HJ DNA bound by 1 or 2 RuvA tetramers; 4 subunits per hexamer contact DNA at a time. Coordinated motions by a converter formed by DNA-disengaged RuvB subunits stimulates ATP hydrolysis and nucleotide exchange. Immobilization of the converter enables RuvB to convert the ATP-contained energy into a lever motion, pulling 2 nucleotides of DNA out of the RuvA tetramer per ATP hydrolyzed, thus driving DNA branch migration. The RuvB motors rotate together with the DNA substrate, which together with the progressing nucleotide cycle form the mechanistic basis for DNA recombination by continuous HJ branch migration. Branch migration allows RuvC to scan DNA until it finds its consensus sequence, where it cleaves and resolves cruciform DNA. The protein is Holliday junction branch migration complex subunit RuvB of Bacteroides thetaiotaomicron (strain ATCC 29148 / DSM 2079 / JCM 5827 / CCUG 10774 / NCTC 10582 / VPI-5482 / E50).